The chain runs to 536 residues: Copine-1 (536 aa).

2 C2 domains span residues 1–113 (MAHC…TLPL) and 122–244 (GRGT…ECIH). Ca(2+) contacts are provided by D21, D27, D79, D81, D91, D152, and D158. K170 is modified (N6-acetyllysine). D213, D215, and D221 together coordinate Ca(2+). A VWFA domain is found at 282 to 484 (QINFTVGVDF…AARDIVQFVP (203 aa)).

This sequence belongs to the copine family. As to quaternary structure, homodimer; homodimerizes via its C2 domains. Interacts with p65/RELA (via N-terminus); this interaction induces proteolytic cleavage of p65/RELA subunit and inhibition of NF-kappa-B transcriptional activity. Interacts (via VWFA domain) with ACTB, CCDC22, MYCBP2, PPP5C, RDX and UBE2O. Ca(2+) serves as cofactor. In terms of tissue distribution, expressed in liver, brain, heart, intestine, kidney and lung (at protein level).

It localises to the nucleus. It is found in the cytoplasm. Its subcellular location is the cell membrane. In terms of biological role, calcium-dependent phospholipid-binding protein that plays a role in calcium-mediated intracellular processes. Involved in the TNF-alpha receptor signaling pathway in a calcium-dependent manner. Exhibits calcium-dependent phospholipid binding properties. Plays a role in neuronal progenitor cell differentiation; induces neurite outgrowth via a AKT-dependent signaling cascade and calcium-independent manner. May recruit target proteins to the cell membrane in a calcium-dependent manner. May function in membrane trafficking. Involved in TNF-alpha-induced NF-kappa-B transcriptional repression by inducing endoprotease processing of the transcription factor NF-kappa-B p65/RELA subunit. Also induces endoprotease processing of NF-kappa-B p50/NFKB1, p52/NFKB2, RELB and REL. This is Copine-1 from Rattus norvegicus (Rat).